The sequence spans 466 residues: ATP synthase subunit beta (466 aa).

153-160 contributes to the ATP binding site; that stretch reads GGAGVGKT.

Belongs to the ATPase alpha/beta chains family. F-type ATPases have 2 components, CF(1) - the catalytic core - and CF(0) - the membrane proton channel. CF(1) has five subunits: alpha(3), beta(3), gamma(1), delta(1), epsilon(1). CF(0) has three main subunits: a(1), b(2) and c(9-12). The alpha and beta chains form an alternating ring which encloses part of the gamma chain. CF(1) is attached to CF(0) by a central stalk formed by the gamma and epsilon chains, while a peripheral stalk is formed by the delta and b chains.

The protein resides in the cell membrane. It carries out the reaction ATP + H2O + 4 H(+)(in) = ADP + phosphate + 5 H(+)(out). Its function is as follows. Produces ATP from ADP in the presence of a proton gradient across the membrane. The catalytic sites are hosted primarily by the beta subunits. In Oenococcus oeni (strain ATCC BAA-331 / PSU-1), this protein is ATP synthase subunit beta.